The following is a 161-amino-acid chain: Arachidonate 5-lipoxygenase-activating protein (161 aa).

The Lumenal segment spans residues 1–8 (MDQEAVGN). Residues 9–30 (VVLLALVTLISVVQNAFFAHKV) traverse the membrane as a helical segment. Residues 31-52 (EHESKAHNGRSFQRTGTLAFER) are Cytoplasmic-facing. A helical transmembrane segment spans residues 53–77 (VYTANQNCVDAYPTFLVVLWTAGLL). Residues 78–80 (CSQ) lie on the Lumenal side of the membrane. Residues 81-102 (VPAAFAGLMYLFVRQKYFVGYL) form a helical membrane-spanning segment. At 103–107 (GERTQ) the chain is on the cytoplasmic side. The stretch at 108 to 115 (STPGYIFG) is an intramembrane region. Residues 116–128 (KRIILFLFLMSFA) form a helical membrane-spanning segment. The Lumenal portion of the chain corresponds to 129-161 (GILNHYLIFFFGSDFENYIRTVSTTISPLLLIP).

It belongs to the MAPEG family. In terms of assembly, homotrimer. Interacts with LTC4S and ALOX5.

It localises to the nucleus membrane. Its subcellular location is the endoplasmic reticulum membrane. Its function is as follows. Required for leukotriene biosynthesis by ALOX5 (5-lipoxygenase). Anchors ALOX5 to the membrane. Binds arachidonic acid, and could play an essential role in the transfer of arachidonic acid to ALOX5. Binds to MK-886, a compound that blocks the biosynthesis of leukotrienes. This chain is Arachidonate 5-lipoxygenase-activating protein (Alox5ap), found in Mus musculus (Mouse).